The sequence spans 168 residues: MNWFFTLASIVIVLDQLTKKIAVMILKEKESVTLIPDWLKFTYAENNGIAFGMEFAPKEVMILLVGTISLLIALYVFRSKNRTTRFILPFALVFGGGVGNMIDRITGGKVIDFIHIDLYNGMIMGTWVSLWPIFNIADSAITIGACLLILFHSTIFPDQSVQKNTDVH.

The next 2 helical transmembrane spans lie at Pro57–Phe77 and Phe86–Thr106. Active-site residues include Asp112 and Asp138. A helical membrane pass occupies residues Trp131–Phe151.

It belongs to the peptidase A8 family.

It is found in the cell inner membrane. It carries out the reaction Release of signal peptides from bacterial membrane prolipoproteins. Hydrolyzes -Xaa-Yaa-Zaa-|-(S,diacylglyceryl)Cys-, in which Xaa is hydrophobic (preferably Leu), and Yaa (Ala or Ser) and Zaa (Gly or Ala) have small, neutral side chains.. It participates in protein modification; lipoprotein biosynthesis (signal peptide cleavage). Its function is as follows. This protein specifically catalyzes the removal of signal peptides from prolipoproteins. This is Lipoprotein signal peptidase from Chlorobium phaeobacteroides (strain DSM 266 / SMG 266 / 2430).